Reading from the N-terminus, the 467-residue chain is Tyrosine phenol-lyase (467 aa).

Lys268 is modified (N6-(pyridoxal phosphate)lysine).

It belongs to the beta-eliminating lyase family. As to quaternary structure, homotetramer. Pyridoxal 5'-phosphate is required as a cofactor.

The catalysed reaction is L-tyrosine + H2O = phenol + pyruvate + NH4(+). The protein is Tyrosine phenol-lyase of Nostoc punctiforme (strain ATCC 29133 / PCC 73102).